The primary structure comprises 345 residues: V-type proton ATPase subunit d (345 aa).

Methionine 1 is subject to N-acetylmethionine.

The protein belongs to the V-ATPase V0D/AC39 subunit family. As to quaternary structure, V-ATPase is a heteromultimeric enzyme composed of a peripheral catalytic V1 complex (components A to H) attached to an integral membrane V0 proton pore complex (components: a, c, c', c'', d, e, f and VOA1).

It is found in the vacuole membrane. In terms of biological role, subunit of the V0 complex of vacuolar(H+)-ATPase (V-ATPase), a multisubunit enzyme composed of a peripheral complex (V1) that hydrolyzes ATP and a membrane integral complex (V0) that translocates protons. V-ATPase is responsible for acidifying and maintaining the pH of intracellular compartments. This subunit is a non-integral membrane component of the membrane pore domain and is required for proper assembly of the V0 sector. Might be involved in the regulated assembly of V1 subunits onto the membrane sector or alternatively may prevent the passage of protons through V0 pores. This is V-type proton ATPase subunit d from Saccharomyces cerevisiae (strain ATCC 204508 / S288c) (Baker's yeast).